We begin with the raw amino-acid sequence, 574 residues long: Putative ABC transporter ATP-binding protein VVA0347 (574 aa).

ABC transporter domains are found at residues Ile3–Glu244 and Leu299–Thr533. ATP is bound by residues Gly37–Ser44 and Gly332–Ser339.

The protein belongs to the ABC transporter superfamily.

The protein resides in the cell inner membrane. Its function is as follows. Probably part of an ABC transporter complex. Responsible for energy coupling to the transport system. This is Putative ABC transporter ATP-binding protein VVA0347 from Vibrio vulnificus (strain YJ016).